The sequence spans 403 residues: Cytoplasmic tRNA 2-thiolation protein 2 (403 aa).

It belongs to the CTU2/NCS2 family.

It localises to the cytoplasm. It participates in tRNA modification; 5-methoxycarbonylmethyl-2-thiouridine-tRNA biosynthesis. Functionally, plays a central role in 2-thiolation of mcm(5)S(2)U at tRNA wobble positions of tRNA(Lys), tRNA(Glu) and tRNA(Gln). May act by forming a heterodimer with NCS6/CTU1 that ligates sulfur from thiocarboxylated URM1 onto the uridine of tRNAs at wobble position. This is Cytoplasmic tRNA 2-thiolation protein 2 from Drosophila ananassae (Fruit fly).